Reading from the N-terminus, the 111-residue chain is Probable 4-amino-4-deoxy-L-arabinose-phosphoundecaprenol flippase subunit ArnE (111 aa).

Transmembrane regions (helical) follow at residues 36–56 (IVLW…LWLL), 61–81 (VPVG…TLAA), and 88–108 (PVSP…VILG). An EamA domain is found at 40–109 (LGLALACIGL…IIGGIVILGS (70 aa)).

This sequence belongs to the ArnE family. In terms of assembly, heterodimer of ArnE and ArnF.

The protein localises to the cell inner membrane. Its pathway is bacterial outer membrane biogenesis; lipopolysaccharide biosynthesis. Functionally, translocates 4-amino-4-deoxy-L-arabinose-phosphoundecaprenol (alpha-L-Ara4N-phosphoundecaprenol) from the cytoplasmic to the periplasmic side of the inner membrane. This is Probable 4-amino-4-deoxy-L-arabinose-phosphoundecaprenol flippase subunit ArnE from Shigella flexneri serotype 5b (strain 8401).